The sequence spans 327 residues: dTDP-4-dehydrorhamnose reductase (327 aa).

Residues 1 to 22 (MDLINGMGTSPGYWRTPREPGN) are disordered. NADH-binding positions include 43–45 (GMV), 69–70 (DI), and 91–93 (AYT). Residues 44–45 (MV), 69–70 (DI), and 91–93 (AYT) contribute to the NADPH site. 132 to 133 (TD) serves as a coordination point for dTDP-beta-L-rhamnose. The NADH site is built by Y157 and K161. NADPH is bound by residues Y157 and K161. Y157 acts as the Proton donor/acceptor in catalysis. W182 contributes to the dTDP-beta-L-rhamnose binding site. The span at 264–276 (PERVRPCGSDRHP) shows a compositional bias: basic and acidic residues. The tract at residues 264-292 (PERVRPCGSDRHPRPAPRPSYTVLSSQRS) is disordered.

It belongs to the dTDP-4-dehydrorhamnose reductase family. The cofactor is Mg(2+).

The catalysed reaction is dTDP-beta-L-rhamnose + NADP(+) = dTDP-4-dehydro-beta-L-rhamnose + NADPH + H(+). It functions in the pathway carbohydrate biosynthesis; dTDP-L-rhamnose biosynthesis. Functionally, involved in the biosynthesis of the dTDP-L-rhamnose which is a component of the critical linker, D-N-acetylglucosamine-L-rhamnose disaccharide, which connects the galactan region of arabinogalactan to peptidoglycan via a phosphodiester linkage. Catalyzes the reduction of dTDP-6-deoxy-L-lyxo-4-hexulose to yield dTDP-L-rhamnose. This is dTDP-4-dehydrorhamnose reductase from Mycolicibacterium smegmatis (strain ATCC 700084 / mc(2)155) (Mycobacterium smegmatis).